The chain runs to 284 residues: MYVVSTKQMLNNAQRGGYAVPAFNIHNLETMQVVVETAANLHAPVIIAGTPGTFTHAGTENLLALVSAMAKQYHHPLAIHLDHHTKFDDIAQKVRSGVRSVMIDASHLPFAQNISRVKEVVDFCHRFDVSVEAELGQLGGQEDDVQVNEADALYTNPAQAREFAEATGIDSLAVAIGTAHGMYASAPALDFSRLENIRQWVNLPLVLHGASGLSTKDIQQTIKLGICKINVATELKNAFSQALKNYLTEHPEATDPRDYLQSAKSAMRDVVSKVIADCGCEGRA.

Catalysis depends on aspartate 82, which acts as the Proton donor. Zn(2+)-binding residues include histidine 83 and histidine 180. Glycine 181 is a dihydroxyacetone phosphate binding site. A Zn(2+)-binding site is contributed by histidine 208. Dihydroxyacetone phosphate-binding positions include 209-211 (GAS) and 230-233 (NVAT).

The protein belongs to the class II fructose-bisphosphate aldolase family. TagBP aldolase GatY subfamily. In terms of assembly, forms a complex with GatZ. The cofactor is Zn(2+).

It catalyses the reaction D-tagatofuranose 1,6-bisphosphate = D-glyceraldehyde 3-phosphate + dihydroxyacetone phosphate. It functions in the pathway carbohydrate metabolism; D-tagatose 6-phosphate degradation; D-glyceraldehyde 3-phosphate and glycerone phosphate from D-tagatose 6-phosphate: step 2/2. Functionally, catalytic subunit of the tagatose-1,6-bisphosphate aldolase GatYZ, which catalyzes the reversible aldol condensation of dihydroxyacetone phosphate (DHAP or glycerone-phosphate) with glyceraldehyde 3-phosphate (G3P) to produce tagatose 1,6-bisphosphate (TBP). Requires GatZ subunit for full activity and stability. Is involved in the catabolism of galactitol. The protein is D-tagatose-1,6-bisphosphate aldolase subunit GatY of Escherichia coli (strain K12 / MC4100 / BW2952).